The primary structure comprises 260 residues: Segregation and condensation protein A (260 aa).

This sequence belongs to the ScpA family. Component of a cohesin-like complex composed of ScpA, ScpB and the Smc homodimer, in which ScpA and ScpB bind to the head domain of Smc. The presence of the three proteins is required for the association of the complex with DNA.

Its subcellular location is the cytoplasm. In terms of biological role, participates in chromosomal partition during cell division. May act via the formation of a condensin-like complex containing Smc and ScpB that pull DNA away from mid-cell into both cell halves. The protein is Segregation and condensation protein A of Halalkalibacterium halodurans (strain ATCC BAA-125 / DSM 18197 / FERM 7344 / JCM 9153 / C-125) (Bacillus halodurans).